Consider the following 310-residue polypeptide: tRNA dimethylallyltransferase (310 aa).

13–20 (GPTASGKT) provides a ligand contact to ATP. 15 to 20 (TASGKT) is a substrate binding site. Interaction with substrate tRNA regions lie at residues 38–41 (DSAL), 162–166 (QRLSR), 243–248 (RCVGYR), and 276–283 (KRQITWLR).

This sequence belongs to the IPP transferase family. In terms of assembly, monomer. Mg(2+) serves as cofactor.

The enzyme catalyses adenosine(37) in tRNA + dimethylallyl diphosphate = N(6)-dimethylallyladenosine(37) in tRNA + diphosphate. Functionally, catalyzes the transfer of a dimethylallyl group onto the adenine at position 37 in tRNAs that read codons beginning with uridine, leading to the formation of N6-(dimethylallyl)adenosine (i(6)A). The sequence is that of tRNA dimethylallyltransferase from Vibrio campbellii (strain ATCC BAA-1116).